The chain runs to 333 residues: L-lactate dehydrogenase B chain (333 aa).

NAD(+) is bound by residues 29-57 and Arg99; that span reads GQVG…LEDK. The substrate site is built by Arg106, Asn138, and Arg169. Asn138 is an NAD(+) binding site. Catalysis depends on His193, which acts as the Proton acceptor. Substrate is bound at residue Thr248.

The protein belongs to the LDH/MDH superfamily. LDH family. As to quaternary structure, homotetramer.

It is found in the cytoplasm. The catalysed reaction is (S)-lactate + NAD(+) = pyruvate + NADH + H(+). The protein operates within fermentation; pyruvate fermentation to lactate; (S)-lactate from pyruvate: step 1/1. Functionally, interconverts simultaneously and stereospecifically pyruvate and lactate with concomitant interconversion of NADH and NAD(+). In Anas platyrhynchos (Mallard), this protein is L-lactate dehydrogenase B chain (LDHB).